The primary structure comprises 352 residues: UDP-N-acetylglucosamine--N-acetylmuramyl-(pentapeptide) pyrophosphoryl-undecaprenol N-acetylglucosamine transferase (352 aa).

The UDP-N-acetyl-alpha-D-glucosamine site is built by S195 and Q287.

Belongs to the glycosyltransferase 28 family. MurG subfamily.

It is found in the cell membrane. The enzyme catalyses Mur2Ac(oyl-L-Ala-gamma-D-Glu-L-Lys-D-Ala-D-Ala)-di-trans,octa-cis-undecaprenyl diphosphate + UDP-N-acetyl-alpha-D-glucosamine = beta-D-GlcNAc-(1-&gt;4)-Mur2Ac(oyl-L-Ala-gamma-D-Glu-L-Lys-D-Ala-D-Ala)-di-trans,octa-cis-undecaprenyl diphosphate + UDP + H(+). Its pathway is cell wall biogenesis; peptidoglycan biosynthesis. Functionally, cell wall formation. Catalyzes the transfer of a GlcNAc subunit on undecaprenyl-pyrophosphoryl-MurNAc-pentapeptide (lipid intermediate I) to form undecaprenyl-pyrophosphoryl-MurNAc-(pentapeptide)GlcNAc (lipid intermediate II). This is UDP-N-acetylglucosamine--N-acetylmuramyl-(pentapeptide) pyrophosphoryl-undecaprenol N-acetylglucosamine transferase from Streptococcus pneumoniae (strain JJA).